Reading from the N-terminus, the 389-residue chain is Glutamate 5-kinase (389 aa).

Lysine 16 is a binding site for ATP. Serine 56, aspartate 143, and asparagine 155 together coordinate substrate. Serine 175 to aspartate 176 contributes to the ATP binding site. The PUA domain maps to alanine 281–alanine 358.

Belongs to the glutamate 5-kinase family.

It is found in the cytoplasm. The catalysed reaction is L-glutamate + ATP = L-glutamyl 5-phosphate + ADP. It participates in amino-acid biosynthesis; L-proline biosynthesis; L-glutamate 5-semialdehyde from L-glutamate: step 1/2. In terms of biological role, catalyzes the transfer of a phosphate group to glutamate to form L-glutamate 5-phosphate. This Rhizobium etli (strain CIAT 652) protein is Glutamate 5-kinase.